Consider the following 259-residue polypeptide: MALKVFNWLNRKKHSNVEYCTINENKAMEEKEDSLRASVTEQDTEALLLRDVLINGILAIGTLGHNVNSLCPESCIEQDEPIIMCDEKVEQEKCEEEKAEAKQDTPVTAPSEPASALEPAKMHSSSMKEDNFMCFVKEEILMHGMEVEDVPNIQERPLLMLEKVEKVRTTLADLFAAEAFSSSDAEDKCYPKIVIVAGASTSKPTSCMEKMHHKKPTKPTSKPLKATRKLSRVMRKMLGKKIHPEQLNGRSNAEGPVTA.

The short motif at 56–62 is the IGT motif element; sequence GILAIGT. 3 disordered regions span residues 96–123, 206–226, and 239–259; these read EEKA…AKMH, SCME…PLKA, and GKKI…PVTA. The segment covering 109-119 has biased composition (low complexity); that stretch reads APSEPASALEP.

The protein belongs to the TAC family. As to expression, expressed in the basal part of seedlings.

Functionally, involved in the regulation of tiller growth angle. Promotes horizontal shoot growth. TAC1 and LAZY1 play opposite functions in the regulation of tiller growth angle. This Oryza sativa subsp. indica (Rice) protein is Protein TILLER ANGLE CONTROL 1.